A 164-amino-acid chain; its full sequence is MTKKDKKAKGPKMSTITTKSGESLKVFEDLHDFETYLKGETEDQEFDHVHCQLKYYPPFVLHDAHDDPEKIKETANSHSKKFVRHLHQHVEKHLLKDIKTAINKPELKFHDKKKQESFDRIVWNYGEETELNAKKFKVSVEVVCKHDGAMVDVDYKTEPLQPLI.

It belongs to the RGI1 family.

The protein localises to the cytoplasm. Involved in the control of energetic metabolism and significantly contribute to cell fitness, especially under respiratory growth conditions. The protein is Respiratory growth induced protein 2 (RGI2) of Saccharomyces cerevisiae (strain JAY291) (Baker's yeast).